The chain runs to 618 residues: Paraneoplastic antigen-like protein 5 (618 aa).

The segment covering 390–399 (AGEEGQRKES) has biased composition (basic and acidic residues). Disordered regions lie at residues 390-409 (AGEEGQRKESGFWAESEPDE), 451-475 (RDTLTKSWGSPDKGTGDMSVAEGQQ), and 519-549 (SMITRPQGNPDRSWDTSGSQDGEDGCSELRM).

It belongs to the PNMA family. In terms of tissue distribution, restricted to testis, where expression is low. Not detected in the brain.

Its subcellular location is the nucleus. The protein is Paraneoplastic antigen-like protein 5 (Pnma5) of Mus musculus (Mouse).